The primary structure comprises 190 residues: Segregation and condensation protein B (190 aa).

This sequence belongs to the ScpB family. Homodimer. Homodimerization may be required to stabilize the binding of ScpA to the Smc head domains. Component of a cohesin-like complex composed of ScpA, ScpB and the Smc homodimer, in which ScpA and ScpB bind to the head domain of Smc. The presence of the three proteins is required for the association of the complex with DNA.

It localises to the cytoplasm. Participates in chromosomal partition during cell division. May act via the formation of a condensin-like complex containing Smc and ScpA that pull DNA away from mid-cell into both cell halves. This is Segregation and condensation protein B from Ruminiclostridium cellulolyticum (strain ATCC 35319 / DSM 5812 / JCM 6584 / H10) (Clostridium cellulolyticum).